The primary structure comprises 291 residues: Acetylglutamate kinase (291 aa).

Residues glycine 65–glycine 66, arginine 87, and asparagine 186 each bind substrate.

Belongs to the acetylglutamate kinase family. ArgB subfamily.

The protein resides in the cytoplasm. The enzyme catalyses N-acetyl-L-glutamate + ATP = N-acetyl-L-glutamyl 5-phosphate + ADP. It functions in the pathway amino-acid biosynthesis; L-arginine biosynthesis; N(2)-acetyl-L-ornithine from L-glutamate: step 2/4. In terms of biological role, catalyzes the ATP-dependent phosphorylation of N-acetyl-L-glutamate. This Mycolicibacterium vanbaalenii (strain DSM 7251 / JCM 13017 / BCRC 16820 / KCTC 9966 / NRRL B-24157 / PYR-1) (Mycobacterium vanbaalenii) protein is Acetylglutamate kinase.